The sequence spans 338 residues: MSTIARRGFHYMQRLNSANVSPALLEKAQNRVIDAALTFIRERAKFKGELMRSLGGVAATSSLLGVPLGHHSSFHEGSAFAPPRIREAIWCDSTNSTTEEGKNLRDPRVITNVGDVPIEEIRDCGVDDKRLANVISESVKLVMDEDPLRPLVLGGDHSISFPVVRAVSEKLGGAVDILHFDAHPDLYHDFEGNYYSHASPFARIMEGGYARRLVQVGIRSITNDVREQVKKYGVETHEMRTLSRDRPILENLKLGEGVKGVYVSIDVDSLDPSIAPGVSHHEPGGLLFRDILNILQNLQGDIVGGDVVEYNPQRDTYDGITALVAAKLVRELAAKMSK.

The transit peptide at 1 to 15 (MSTIARRGFHYMQRL) directs the protein to the mitochondrion. L-ornithine contacts are provided by residues Ser73 and 92–95 (DSTN). Mn(2+) is bound by residues His157, Asp181, His183, and Asp185. L-ornithine is bound at residue 185–187 (DLY). Substrate is bound at residue 191-193 (EGN). Position 220 (Ser220) interacts with L-ornithine. Mn(2+) is bound by residues Asp266 and Asp268. Glu309 contributes to the substrate binding site.

The protein belongs to the arginase family. Forms homohexamers. Mn(2+) serves as cofactor.

It is found in the mitochondrion. It catalyses the reaction L-arginine + H2O = urea + L-ornithine. The enzyme catalyses agmatine + H2O = urea + putrescine. It participates in nitrogen metabolism; urea cycle; L-ornithine and urea from L-arginine: step 1/1. Its pathway is amine and polyamine biosynthesis; putrescine biosynthesis via agmatine pathway; putrescine from agmatine: step 1/1. Functionally, catalyzes the hydrolysis of L-arginine to urea and L-ornithine. The latter can be utilized in the urea cycle or as a precursor for the synthesis of both polyamines and proline. Possesses agmatinase activity. Catalyzes the formation of putrescine from agmatine. The chain is Arginase, mitochondrial from Medicago truncatula (Barrel medic).